A 189-amino-acid polypeptide reads, in one-letter code: Thymidine kinase (189 aa).

Residues 9–16 (GTMNSGKT) and 85–88 (DESQ) each bind ATP. Catalysis depends on glutamate 86, which acts as the Proton acceptor. Residues cysteine 143, cysteine 146, cysteine 180, and histidine 183 each contribute to the Zn(2+) site.

Belongs to the thymidine kinase family. Homotetramer.

The protein resides in the cytoplasm. It carries out the reaction thymidine + ATP = dTMP + ADP + H(+). This is Thymidine kinase from Streptococcus pyogenes serotype M3 (strain ATCC BAA-595 / MGAS315).